A 248-amino-acid polypeptide reads, in one-letter code: Pulmonary surfactant-associated protein A (248 aa).

Residues 1–20 (MLLCSLTLTLLWMVASGLEC) form the signal peptide. Residues 28–100 (GSPGIPGTPG…PGERGPPGFP (73 aa)) enclose the Collagen-like domain. The tract at residues 29-102 (SPGIPGTPGS…ERGPPGFPAY (74 aa)) is disordered. 4-hydroxyproline occurs at positions 30, 33, 36, 42, 54, 57, 63, 67, and 70. A compositionally biased stretch (basic and acidic residues) spans 42–51 (PGRDGRDGIK). Residues 54–65 (PGPPGPMGPPGG) show a composition bias toward pro residues. Residues 69–82 (LPGRDGMTGAPGLP) are compositionally biased toward low complexity. Basic and acidic residues predominate over residues 84 to 93 (ERGEKGEPGE). Residues 132 to 248 (LAVGEKVFST…LQYRLAICEF (117 aa)) form the C-type lectin domain. 2 cysteine pairs are disulfide-bonded: C155/C246 and C224/C238. N-linked (GlcNAc...) asparagine glycosylation is present at N207. Ca(2+) is bound by residues E215, R217, N234, and D235.

It belongs to the SFTPA family. As to quaternary structure, oligomeric complex of 6 set of homotrimers.

The protein localises to the secreted. It localises to the extracellular space. Its subcellular location is the extracellular matrix. It is found in the surface film. In terms of biological role, in presence of calcium ions, it binds to surfactant phospholipids and contributes to lower the surface tension at the air-liquid interface in the alveoli of the mammalian lung and is essential for normal respiration. Enhances the expression of MYO18A/SP-R210 on alveolar macrophages. In Bos taurus (Bovine), this protein is Pulmonary surfactant-associated protein A (SFTPA1).